The chain runs to 357 residues: Homoserine O-acetyltransferase (357 aa).

One can recognise an AB hydrolase-1 domain in the interval Asn-51–Ile-340. The active-site Nucleophile is the Ser-147. Arg-216 provides a ligand contact to substrate. Residues Asp-306 and His-335 contribute to the active site. Asp-336 contacts substrate.

The protein belongs to the AB hydrolase superfamily. MetX family. In terms of assembly, homodimer.

It localises to the cytoplasm. The enzyme catalyses L-homoserine + acetyl-CoA = O-acetyl-L-homoserine + CoA. Its pathway is amino-acid biosynthesis; L-methionine biosynthesis via de novo pathway; O-acetyl-L-homoserine from L-homoserine: step 1/1. Functionally, transfers an acetyl group from acetyl-CoA to L-homoserine, forming acetyl-L-homoserine. The polypeptide is Homoserine O-acetyltransferase (Chlorobium chlorochromatii (strain CaD3)).